We begin with the raw amino-acid sequence, 131 residues long: Profilin-3 (131 aa).

Cysteine 13 and cysteine 115 are disulfide-bonded. Residues 81–97 (AVIRGKKGAGGITIKKT) carry the Involved in PIP2 interaction motif. Threonine 111 bears the Phosphothreonine mark.

Belongs to the profilin family. As to quaternary structure, occurs in many kinds of cells as a complex with monomeric actin in a 1:1 ratio. Phosphorylated by MAP kinases.

It is found in the cytoplasm. It localises to the cytoskeleton. In terms of biological role, binds to actin and affects the structure of the cytoskeleton. At high concentrations, profilin prevents the polymerization of actin, whereas it enhances it at low concentrations. In Olea europaea (Common olive), this protein is Profilin-3.